We begin with the raw amino-acid sequence, 242 residues long: ATP synthase subunit a (242 aa).

6 consecutive transmembrane segments (helical) span residues 29–49, 84–104, 114–134, 140–160, 189–209, and 210–230; these read SAAYMLLASVLALTYFYLAFS, FVPVIFTLFVFILFCNLFGMI, IIITFALAILVFLMVTIVGFV, FLSLFLPHGTPLWLAPLMIII, VIASFVVTLMIYLKFLPIPLM, and VILIGFEIFVAILQAYIFTIL.

Belongs to the ATPase A chain family. F-type ATPases have 2 components, CF(1) - the catalytic core - and CF(0) - the membrane proton channel. CF(1) has five subunits: alpha(3), beta(3), gamma(1), delta(1), epsilon(1). CF(0) has three main subunits: a(1), b(2) and c(9-12). The alpha and beta chains form an alternating ring which encloses part of the gamma chain. CF(1) is attached to CF(0) by a central stalk formed by the gamma and epsilon chains, while a peripheral stalk is formed by the delta and b chains.

The protein resides in the cell inner membrane. In terms of biological role, key component of the proton channel; it plays a direct role in the translocation of protons across the membrane. This Rickettsia bellii (strain RML369-C) protein is ATP synthase subunit a.